Here is a 662-residue protein sequence, read N- to C-terminus: Methyl-accepting chemotaxis protein McpB (662 aa).

The Cytoplasmic portion of the chain corresponds to 1 to 16 (MKTFINWLKKPSISKK). The chain crosses the membrane as a helical span at residues 17 to 37 (LIVSFIAILIIPILILEFSSY). Residues 38 to 282 (RSASGKLDQE…IKDASKSVLT (245 aa)) are Extracellular-facing. The Cache domain maps to 153–229 (VTDPYVAASD…KAGEKLSGDW (77 aa)). The helical transmembrane segment at 283 to 303 (TGMIVLIASIVAGGILILFIV) threads the bilayer. One can recognise an HAMP domain in the interval 304 to 356 (RSITKPLKRLVQSSKTISRGDLTETIEIHSKDELGELGESFNEMGQSLRSLIS). Residues 304–662 (RSITKPLKRL…RDLTKQFKIE (359 aa)) are Cytoplasmic-facing. Residues Gln-371 and Gln-595 each carry the glutamate methyl ester (Gln) modification. Positions 375 to 611 (SAGQTSKATE…HVSAAVSGIA (237 aa)) constitute a Methyl-accepting transducer domain. Glutamate methyl ester (Glu) occurs at positions 630 and 637.

Belongs to the methyl-accepting chemotaxis (MCP) protein family. In terms of assembly, interacts with FloT. Post-translationally, some glutamine residues are deamidated to glutamate by CheD and subsequently methylated. In terms of processing, the demethylation is selective. Gln-371 is demethylated only upon asparagine addition whereas Glu-637 is demethylated only upon asparagine removal. Glu-630 appears indiscriminate and is demethylated upon both addition and removal of asparagine.

Its subcellular location is the cell membrane. The protein resides in the membrane raft. In terms of biological role, chemotactic-signal transducers respond to changes in the concentration of attractants and repellents in the environment, transduce a signal from the outside to the inside of the cell, and facilitate sensory adaptation through the variation of the level of methylation. All amino acids serve as attractants in B.subtilis, they appear to cause an increase in the turnover methyl groups, leading to methylation of an unidentified acceptor, while repellents have been shown to cause a decrease in methyl group turnover. The methyl groups are added by a methyltransferase and removed by a methylesterase. McpB is required for taxis towards asparagine, aspartate, glutamine, and histidine. This Bacillus subtilis (strain 168) protein is Methyl-accepting chemotaxis protein McpB (mcpB).